Here is a 106-residue protein sequence, read N- to C-terminus: Toxin-like structure LSTX-D6 (106 aa).

The N-terminal stretch at 1–20 (MMKVLVVAALLVTLISYSSS) is a signal peptide. The propeptide occupies 21–41 (EGIDDLEADELLSLMANEQTR). 4 disulfides stabilise this stretch: Cys45/Cys60, Cys52/Cys69, Cys59/Cys85, and Cys71/Cys83.

This sequence belongs to the neurotoxin 19 (CSTX) family. 02 (D7) subfamily. In terms of tissue distribution, expressed by the venom gland.

The protein localises to the secreted. This chain is Toxin-like structure LSTX-D6, found in Lycosa singoriensis (Wolf spider).